The sequence spans 380 residues: Crotonobetainyl-CoA reductase (380 aa).

It belongs to the acyl-CoA dehydrogenase family. As to quaternary structure, homotetramer. The cofactor is FAD.

The protein localises to the cytoplasm. The enzyme catalyses 4-(trimethylamino)butanoyl-CoA + oxidized [electron-transfer flavoprotein] + H(+) = crotonobetainyl-CoA + reduced [electron-transfer flavoprotein]. Its pathway is amine and polyamine metabolism; carnitine metabolism. Functionally, catalyzes the reduction of crotonobetainyl-CoA to gamma-butyrobetainyl-CoA. This chain is Crotonobetainyl-CoA reductase, found in Salmonella typhi.